The sequence spans 345 residues: MKALEWMGDSLKILDQTRLPVEIKYRMAATYEEVAEAIEKMEVRGAPAIGAAAAYGYALGAIGYSGELADLPAHMEKVQHRLAETRPTAVNLFWALRRMEDRLRDQHEAKELAEIRQALVAEAENIAEDDRRVNRLIGEHGNAIVTAEANILTHCNAGALATVEYGTALGVIRAAQQAGKKVHVYAGETRPFLQGARLTALELMNDHIPVTLIADNMAGFLMQQGNIDLVIVGADRIAANGDTANKIGTYSLAVLAHAHGIPFYVAAPTSTIDLKVPSGQDIPIEERNPKELREVFGVQVAPPEVPVYNPAFDVTPAKLITGIITEKGIVTSPYSVNLLKMMVRS.

Substrate-binding positions include 44 to 46 (RGA), arginine 86, and glutamine 194. The Proton donor role is filled by aspartate 235. 245–246 (NK) is a binding site for substrate.

This sequence belongs to the eIF-2B alpha/beta/delta subunits family. MtnA subfamily.

It catalyses the reaction 5-(methylsulfanyl)-alpha-D-ribose 1-phosphate = 5-(methylsulfanyl)-D-ribulose 1-phosphate. It functions in the pathway amino-acid biosynthesis; L-methionine biosynthesis via salvage pathway; L-methionine from S-methyl-5-thio-alpha-D-ribose 1-phosphate: step 1/6. Functionally, catalyzes the interconversion of methylthioribose-1-phosphate (MTR-1-P) into methylthioribulose-1-phosphate (MTRu-1-P). This is Methylthioribose-1-phosphate isomerase from Desulfitobacterium hafniense (strain DSM 10664 / DCB-2).